The sequence spans 455 residues: Probable glycine dehydrogenase (decarboxylating) subunit 1 (455 aa).

This sequence belongs to the GcvP family. N-terminal subunit subfamily. In terms of assembly, the glycine cleavage system is composed of four proteins: P, T, L and H. In this organism, the P 'protein' is a heterodimer of two subunits.

It catalyses the reaction N(6)-[(R)-lipoyl]-L-lysyl-[glycine-cleavage complex H protein] + glycine + H(+) = N(6)-[(R)-S(8)-aminomethyldihydrolipoyl]-L-lysyl-[glycine-cleavage complex H protein] + CO2. In terms of biological role, the glycine cleavage system catalyzes the degradation of glycine. The P protein binds the alpha-amino group of glycine through its pyridoxal phosphate cofactor; CO(2) is released and the remaining methylamine moiety is then transferred to the lipoamide cofactor of the H protein. This Saccharolobus islandicus (strain Y.N.15.51 / Yellowstone #2) (Sulfolobus islandicus) protein is Probable glycine dehydrogenase (decarboxylating) subunit 1.